Consider the following 123-residue polypeptide: WAP four-disulfide core domain protein 5 (123 aa).

An N-terminal signal peptide occupies residues 1-24; that stretch reads MRTQSLLLLGALLAVGSQLPAVFG. 2 WAP domains span residues 27–73 and 74–121; these read KGEK…CVPR and VSVK…RDPA. 8 cysteine pairs are disulfide-bonded: C34–C62, C41–C66, C49–C61, C55–C70, C81–C109, C88–C113, C96–C108, and C102–C117.

Its subcellular location is the secreted. Putative acid-stable proteinase inhibitor. The chain is WAP four-disulfide core domain protein 5 (WFDC5) from Pan troglodytes (Chimpanzee).